Here is a 447-residue protein sequence, read N- to C-terminus: Dimethylsulfoniopropionate lyase DddP (447 aa).

Positions 1 to 26 are disordered; it reads MNRHFNATRKIDPSRGATLGDGSPND. The a divalent metal cation site is built by Asp295, Asp297, Asp307, His371, Glu406, and Glu421.

It belongs to the peptidase M24B family. As to quaternary structure, homodimer. Requires a divalent metal cation as cofactor.

The enzyme catalyses S,S-dimethyl-beta-propiothetin = acrylate + dimethyl sulfide + H(+). Its function is as follows. Able to cleave dimethylsulfoniopropionate (DMSP), releasing dimethyl sulfide (DMS). DMS is the principal form by which sulfur is transported from oceans to the atmosphere. The real activity of the protein is however subject to debate and it is unclear whether it constitutes a real dimethylsulfoniopropionate lyase in vivo: the low activity with DMSP as substrate suggests that DMSP is not its native substrate. In Roseobacter denitrificans (strain ATCC 33942 / OCh 114) (Erythrobacter sp. (strain OCh 114)), this protein is Dimethylsulfoniopropionate lyase DddP.